The primary structure comprises 386 residues: Microtubule-binding protein TANGLED1 (386 aa).

5 disordered regions span residues 83-105 (RMRGGASAQKRSPSGKFGGGVGG), 140-202 (AAGA…RVRS), 244-266 (HASTSAATDPCATPSPSKKQKRL), 303-330 (PARPAAVSPPPPVKAQASPAKTRRCSFS), and 345-386 (RLSL…ISSR). The span at 170–180 (RARRAREKQSH) shows a compositional bias: basic residues. Over residues 181–193 (RGGAATRGADAAT) the composition is skewed to low complexity. Residues 375 to 386 (TVRTVSSKISSR) are compositionally biased toward polar residues.

In terms of tissue distribution, expressed in vegetative shoot tips consisting of leaf primordia and the bases of immature leaves, the shoot apical meristem, and unexpanded stem tissue. Strongly expressed in tissues enriched in dividing cells: ear primordia and embryos.

It is found in the cytoplasm. Its subcellular location is the cytoskeleton. The protein resides in the spindle. It localises to the phragmoplast. Is required for spatial control cell division during leaf development. Through an association with microtubules, acts both for the positioning of cytoskeletal arrays that establish planes of cell division during prophase and for spatial guidance of expanding phragmoplasts toward preestablished cortical division sites (CDS) during cytokinesis. This is Microtubule-binding protein TANGLED1 (TAN1) from Zea mays (Maize).